We begin with the raw amino-acid sequence, 238 residues long: Large ribosomal subunit protein uL2 (238 aa).

Positions 1-11 are enriched in polar residues; that stretch reads MGKRLISQNRG. Disordered stretches follow at residues 1-22 and 202-223; these read MGKR…APSH and FGGG…APPG.

It belongs to the universal ribosomal protein uL2 family. In terms of assembly, part of the 50S ribosomal subunit. Forms a bridge to the 30S subunit in the 70S ribosome.

In terms of biological role, one of the primary rRNA binding proteins. Required for association of the 30S and 50S subunits to form the 70S ribosome, for tRNA binding and peptide bond formation. It has been suggested to have peptidyltransferase activity; this is somewhat controversial. Makes several contacts with the 16S rRNA in the 70S ribosome. This chain is Large ribosomal subunit protein uL2, found in Methanosarcina acetivorans (strain ATCC 35395 / DSM 2834 / JCM 12185 / C2A).